The chain runs to 146 residues: uncharacterized protein (146 aa).

This is an uncharacterized protein from Haemophilus influenzae (strain ATCC 51907 / DSM 11121 / KW20 / Rd).